The following is a 221-amino-acid chain: MHKVVLISLRGYREWTESLGPRREHIIQKVQARIHGALWSSFTAVGALPHHFRYDYLIALANNVPRHWIDTAVAKIRRSSPVEVDYCIGMGETPLDAYRSCGEHKEGKESNAVVAHVDIVNSTDATRINGPIHTYLRALDMLRTAAGACEDVGCIAFYLGGDNMVVYLPEPKAIYALLDRVEAPVRAGVGVSPRPYTAFVKATKGLDALRAENKTGVKVVR.

The protein belongs to the archaeal-type GTP cyclohydrolase family.

It catalyses the reaction GTP + 3 H2O = 2-amino-5-formylamino-6-(5-phospho-D-ribosylamino)pyrimidin-4(3H)-one + 2 phosphate + 2 H(+). In terms of biological role, catalyzes the formation of 2-amino-5-formylamino-6-ribofuranosylamino-4(3H)-pyrimidinone ribonucleotide monophosphate and inorganic phosphate from GTP. Also has an independent pyrophosphate phosphohydrolase activity. This Pyrobaculum arsenaticum (strain DSM 13514 / JCM 11321 / PZ6) protein is GTP cyclohydrolase III.